The following is a 192-amino-acid chain: Ion-translocating oxidoreductase complex subunit A (192 aa).

The next 6 membrane-spanning stretches (helical) occupy residues 5–25, 39–59, 65–85, 102–122, 134–154, and 171–191; these read LLLL…FLGL, IGMS…SYLV, LPFD…AVVV, ALGI…VALL, AIFG…FSAM, and AIAM…TGLV.

This sequence belongs to the NqrDE/RnfAE family. As to quaternary structure, the complex is composed of six subunits: RnfA, RnfB, RnfC, RnfD, RnfE and RnfG.

It is found in the cell inner membrane. Part of a membrane-bound complex that couples electron transfer with translocation of ions across the membrane. This Shewanella pealeana (strain ATCC 700345 / ANG-SQ1) protein is Ion-translocating oxidoreductase complex subunit A.